Here is a 76-residue protein sequence, read N- to C-terminus: Putative snRNP Sm-like protein (76 aa).

Residues 4 to 76 (RPLDVIHKSL…VLAISPVEIE (73 aa)) form the Sm domain.

It belongs to the snRNP Sm proteins family.

The polypeptide is Putative snRNP Sm-like protein (Thermococcus sibiricus (strain DSM 12597 / MM 739)).